The following is a 520-amino-acid chain: GMP synthase [glutamine-hydrolyzing] (520 aa).

A Glutamine amidotransferase type-1 domain is found at 13-205 (KIIVLDYGSQ…ALNICKAKGD (193 aa)). Cys-90 functions as the Nucleophile in the catalytic mechanism. Active-site residues include His-179 and Glu-181. In terms of domain architecture, GMPS ATP-PPase spans 206–395 (WSMDNFIDMQ…LGMPDHIVWR (190 aa)). 233 to 239 (SGGVDSS) contributes to the ATP binding site.

Homodimer.

It catalyses the reaction XMP + L-glutamine + ATP + H2O = GMP + L-glutamate + AMP + diphosphate + 2 H(+). It participates in purine metabolism; GMP biosynthesis; GMP from XMP (L-Gln route): step 1/1. Functionally, catalyzes the synthesis of GMP from XMP. This chain is GMP synthase [glutamine-hydrolyzing], found in Streptococcus pneumoniae (strain ATCC 700669 / Spain 23F-1).